Consider the following 261-residue polypeptide: MIVVKIGGSVVCKDASKVIQNLPKYADRAVVIHGGGCLVNELLKRMGIEPKFLTHPGGLVSRYTDWETLKVFVMAMGWINKYIVASLHGLGVQALGLTGADLGVVVAKRKERVLVIDERGRQRVVDGGYVGKIAEIRVDKLTPPPLKVLAPVAVSEKGELLNIDGDQLAFDVAREAKAERLILLSDVEGLILGGKVVPRLTPEEAEKLVKSEEVRGGMKRKLLMASEAAKLGIEVVISSGLVDSPIDAALNGAGTHIIKNI.

Residues 35–36 (GG), arginine 62, and asparagine 162 each bind substrate.

It belongs to the acetylglutamate kinase family. LysZ subfamily.

The protein localises to the cytoplasm. The enzyme catalyses [amino-group carrier protein]-C-terminal-N-(1,4-dicarboxybutan-1-yl)-L-glutamine + ATP = [amino-group carrier protein]-C-terminal-N-(1-carboxy-5-phosphooxy-5-oxopentan-1-yl)-L-glutamine + ADP. It catalyses the reaction [amino-group carrier protein]-C-terminal-gamma-(L-glutamyl)-L-glutamate + ATP = [amino-group carrier protein]-C-terminal-gamma-(5-phospho-L-glutamyl)-L-glutamate + ADP. It participates in amino-acid biosynthesis; L-lysine biosynthesis via AAA pathway; L-lysine from L-alpha-aminoadipate (Thermus route): step 2/5. It functions in the pathway amino-acid biosynthesis; L-arginine biosynthesis. Functionally, involved in both the arginine and lysine biosynthetic pathways. Phosphorylates the LysW-bound precursors glutamate (for arginine biosynthesis), respectively alpha-aminoadipate (for lysine biosynthesis). The protein is Putative [LysW]-aminoadipate/[LysW]-glutamate kinase of Pyrobaculum aerophilum (strain ATCC 51768 / DSM 7523 / JCM 9630 / CIP 104966 / NBRC 100827 / IM2).